Consider the following 97-residue polypeptide: NELL2-interacting cell ontogeny regulator 1 (97 aa).

The signal sequence occupies residues 1–35 (MAPLPPCGPPRSPPPRLLLLLLLLSATLLGAPARA).

The protein belongs to the NICOL family. Interacts with NELL2; triggers epididymal differentiation. Interacts with cell surface receptor TFRC; the interaction mediates uptake of NICOL1 into fibroblasts.

It localises to the secreted. It is found in the cytoplasm. The protein resides in the perinuclear region. MRNA-binding protein which interacts with a range of target mRNAs including SERPINE1, ACTA2, CCN2 and COL4A1 and may promote extracellular matrix production. Binds to the 3'-UTR of SERPINE1 mRNA and stabilizes the mRNA, possibly by competing for binding with SERBP1 and preventing SERBP1-mediated mRNA degradation. Also binds to the 3'-UTR of ACTA2. Testis-derived lumicrine factor that triggers epididymal differentiation and sperm maturation. The chain is NELL2-interacting cell ontogeny regulator 1 from Bos taurus (Bovine).